Reading from the N-terminus, the 591-residue chain is V-type ATP synthase alpha chain (591 aa).

Position 242–249 (242–249 (GPFGAGKT)) interacts with ATP.

It belongs to the ATPase alpha/beta chains family.

It catalyses the reaction ATP + H2O + 4 H(+)(in) = ADP + phosphate + 5 H(+)(out). In terms of biological role, produces ATP from ADP in the presence of a proton gradient across the membrane. The V-type alpha chain is a catalytic subunit. The chain is V-type ATP synthase alpha chain from Chlamydia trachomatis serovar L2 (strain ATCC VR-902B / DSM 19102 / 434/Bu).